The sequence spans 463 residues: MFS-type transporter criB (463 aa).

The next 11 membrane-spanning stretches (helical) occupy residues 5–27, 46–66, 83–103, 106–126, 141–161, 168–188, 256–276, 293–313, 323–343, 355–375, and 402–422; these read LVLSCGVIAGISGFLFGYDSGIM, MVGTIVAIMQAGGFFGCLTAG, VFVVVGGALQAAAYHTAMLLI, LVTGFGVGSLTMTVPVYQAEI, LMLAIGSAIANWTGYGCSFVN, MPLALQAVPGIVLFFGSYFLP, LFLGAGIWLMLNLTGINVINY, IFLSGVYGSVGAATTFLALFF, LMMANISQTATLIVMAGLTAA, VAMIFLFFVIYCSTWGPLSWV, and FYFLFVATNFISALVLLFLYP.

The protein belongs to the major facilitator superfamily. Sugar transporter (TC 2.A.1.1) family.

The protein localises to the membrane. In terms of biological role, MFS-type transporter; part of the gene cluster that mediates the biosynthesis of echinulin family alkaloid. The polypeptide is MFS-type transporter criB (Aspergillus cristatus (Chinese Fuzhuan brick tea-fermentation fungus)).